The chain runs to 330 residues: D-alanine--D-alanine ligase (330 aa).

One can recognise an ATP-grasp domain in the interval 120-326 (KLWLSALDIP…FKQFLEGIIR (207 aa)). 150–205 (AFRNWGAVFVKAASQGSSVGCYKVTDAAKLSEAVNAAFGYSDQVLVEKAVRPRELE) provides a ligand contact to ATP. Aspartate 280, glutamate 293, and asparagine 295 together coordinate Mg(2+).

This sequence belongs to the D-alanine--D-alanine ligase family. It depends on Mg(2+) as a cofactor. The cofactor is Mn(2+).

It is found in the cytoplasm. The catalysed reaction is 2 D-alanine + ATP = D-alanyl-D-alanine + ADP + phosphate + H(+). It participates in cell wall biogenesis; peptidoglycan biosynthesis. Cell wall formation. The chain is D-alanine--D-alanine ligase from Tolumonas auensis (strain DSM 9187 / NBRC 110442 / TA 4).